A 364-amino-acid chain; its full sequence is Probable protein phosphatase methylesterase 1 (364 aa).

A disordered region spans residues 1–53 (MSDDKLDTLPDLQSETSHVTTPHRQNDLLRQAVTHGRPPPVPSTSTSGKKREM). A compositionally biased stretch (polar residues) spans 11–23 (DLQSETSHVTTPH). Residues S164, D190, and H316 contribute to the active site.

It belongs to the AB hydrolase superfamily.

It catalyses the reaction [phosphatase 2A protein]-C-terminal L-leucine methyl ester + H2O = [phosphatase 2A protein]-C-terminal L-leucine + methanol + H(+). Its function is as follows. Demethylates proteins that have been reversibly carboxymethylated. This Caenorhabditis elegans protein is Probable protein phosphatase methylesterase 1.